The primary structure comprises 149 residues: Large ribosomal subunit protein uL24 (149 aa).

A disordered region spans residues 114–149 (RKIIERSGGTPEVEAVPEKSEEEKEEKEKEEEKSEE). A compositionally biased stretch (basic and acidic residues) spans 129–149 (VPEKSEEEKEEKEKEEEKSEE).

The protein belongs to the universal ribosomal protein uL24 family. As to quaternary structure, part of the 50S ribosomal subunit.

Functionally, one of two assembly initiator proteins, it binds directly to the 5'-end of the 23S rRNA, where it nucleates assembly of the 50S subunit. Located at the polypeptide exit tunnel on the outside of the subunit. The chain is Large ribosomal subunit protein uL24 from Methanopyrus kandleri (strain AV19 / DSM 6324 / JCM 9639 / NBRC 100938).